A 214-amino-acid polypeptide reads, in one-letter code: Cytochrome b (214 aa).

The next 4 membrane-spanning stretches (helical) occupy residues 31-51 (FGSM…FLAI), 75-96 (WTMQ…YIHI), 111-131 (WLSG…GYVL), and 176-196 (FFAL…AHIM). Residues histidine 81 and histidine 95 each contribute to the heme b site. Residues histidine 180 and histidine 194 each coordinate heme b. Histidine 199 contacts a ubiquinone.

It belongs to the cytochrome b family. The cytochrome bc1 complex contains 3 respiratory subunits (MT-CYB, CYC1 and UQCRFS1), 2 core proteins (UQCRC1 and UQCRC2) and probably 6 low-molecular weight proteins. It depends on heme b as a cofactor.

The protein localises to the mitochondrion inner membrane. Functionally, component of the ubiquinol-cytochrome c reductase complex (complex III or cytochrome b-c1 complex) that is part of the mitochondrial respiratory chain. The b-c1 complex mediates electron transfer from ubiquinol to cytochrome c. Contributes to the generation of a proton gradient across the mitochondrial membrane that is then used for ATP synthesis. The protein is Cytochrome b (MT-CYB) of Elapsoidea semiannulata (Angolan garter snake).